Consider the following 344-residue polypeptide: MEENKRVRRKRYSGLYPKKYNEKYKEKNPEKYKETIQKVMKKGNTPAGMHRSIMVDEILHFFDIKLGQVGIDLTTGFGGHSKEILKKLNHTGHLHGIDQDPIELPKTRARLESYGFNKDNFTLHQLNFKDFDAIDTEGFDFILADLGVSSMQIDNPDRGFTFREEGPLDLRMNPNVGIPAYVRLLEMSEIEIEHMLIENADEIYAKEIAKEITKAKIQGRYIRTTLDLHQVIASALQKVSKKVYEEELKKASSRTFQALRIDVNSEYEVLFEMLDKLPGKLNPGGKVAILSFHSGEDRLVKKAFKQYLNDGVFSMTEGPILPSKEEVFNNPRARSAKLRIAIKG.

S-adenosyl-L-methionine contacts are provided by residues 78-80, Asp-98, Phe-131, Asp-145, and Gln-152; that span reads GGH.

This sequence belongs to the methyltransferase superfamily. RsmH family.

Its subcellular location is the cytoplasm. It carries out the reaction cytidine(1402) in 16S rRNA + S-adenosyl-L-methionine = N(4)-methylcytidine(1402) in 16S rRNA + S-adenosyl-L-homocysteine + H(+). Specifically methylates the N4 position of cytidine in position 1402 (C1402) of 16S rRNA. This Acholeplasma laidlawii (strain PG-8A) protein is Ribosomal RNA small subunit methyltransferase H 2.